Consider the following 119-residue polypeptide: Protein TusC (119 aa).

It belongs to the DsrF/TusC family. As to quaternary structure, heterohexamer, formed by a dimer of trimers. The hexameric TusBCD complex contains 2 copies each of TusB, TusC and TusD. The TusBCD complex interacts with TusE.

It is found in the cytoplasm. Its function is as follows. Part of a sulfur-relay system required for 2-thiolation of 5-methylaminomethyl-2-thiouridine (mnm(5)s(2)U) at tRNA wobble positions. The polypeptide is Protein TusC (Serratia proteamaculans (strain 568)).